The sequence spans 256 residues: Probable serine/threonine-protein kinase YbdM (256 aa).

Residues 25-256 form the Protein kinase domain; that stretch reads YKIEECLGMG…DLNRAIQSVT (232 aa). Residues 31 to 39 and Lys54 contribute to the ATP site; that span reads LGMGGYGLV. The Proton acceptor role is filled by Asp149.

Belongs to the protein kinase superfamily. Ser/Thr protein kinase family.

It catalyses the reaction L-seryl-[protein] + ATP = O-phospho-L-seryl-[protein] + ADP + H(+). The catalysed reaction is L-threonyl-[protein] + ATP = O-phospho-L-threonyl-[protein] + ADP + H(+). This is Probable serine/threonine-protein kinase YbdM (ybdM) from Bacillus subtilis (strain 168).